Reading from the N-terminus, the 207-residue chain is Ion-translocating oxidoreductase complex subunit B (207 aa).

The segment at 1 to 29 (MLDLSIIAYLLIAICLIALIFGALLGYFS) is hydrophobic. The 4Fe-4S domain maps to 35 to 93 (EADPIVDQIDAILPQSQCGQCGYPGCKPYAEAIANGDQITKCVPGGQPLVVKIAELMGV). [4Fe-4S] cluster contacts are provided by C52, C55, C60, C76, C116, C119, C122, C126, C146, C149, C152, and C156. 4Fe-4S ferredoxin-type domains are found at residues 107–136 (KVAL…GTNK) and 137–166 (AMHT…MIKV).

This sequence belongs to the 4Fe4S bacterial-type ferredoxin family. RnfB subfamily. The complex is composed of six subunits: RnfA, RnfB, RnfC, RnfD, RnfE and RnfG. Requires [4Fe-4S] cluster as cofactor.

The protein localises to the cell inner membrane. Its function is as follows. Part of a membrane-bound complex that couples electron transfer with translocation of ions across the membrane. In Haemophilus ducreyi (strain 35000HP / ATCC 700724), this protein is Ion-translocating oxidoreductase complex subunit B.